Here is a 402-residue protein sequence, read N- to C-terminus: O-glucosyltransferase rumi homolog (402 aa).

Positions 1 to 20 (MPYLEIVLALLVLSFQLGHS) are cleaved as a signal peptide. Disulfide bonds link Cys-67–Cys-74, Cys-72–Cys-375, Cys-118–Cys-124, and Cys-279–Cys-302. Residue Asn-71 is glycosylated (N-linked (GlcNAc...) asparagine). Catalysis depends on Asp-149, which acts as the Proton donor/acceptor. The tract at residues 189-194 (AISLYP) is interaction with the consensus sequence C-X-S-X-[PA]-C in peptide substrates. UDP-alpha-D-glucose-binding positions include 226-230 (RGSRT), Arg-234, 273-275 (VRL), and 291-295 (AASFR).

Belongs to the glycosyltransferase 90 family.

It is found in the endoplasmic reticulum lumen. The protein localises to the secreted. Its pathway is protein modification; protein glycosylation. Functionally, protein O-glucosyltransferase. Catalyzes the reaction that attaches glucose through an O-glycosidic linkage to a conserved serine residue found in the consensus sequence C-X-S-X-[PA]-C in epidermal growth factor-like repeats. Regulates Notch signaling by glucosylating Notch in the ER, glucosylation is required for the correct folding and cleavage of Notch. This Aedes aegypti (Yellowfever mosquito) protein is O-glucosyltransferase rumi homolog.